The following is a 61-amino-acid chain: UPF0337 protein LMOf2365_2190 (61 aa).

Residues 1-61 are disordered; it reads MSEDKGMKDK…TGDAKKKLSE (61 aa).

The protein belongs to the UPF0337 (CsbD) family.

This Listeria monocytogenes serotype 4b (strain F2365) protein is UPF0337 protein LMOf2365_2190.